A 457-amino-acid polypeptide reads, in one-letter code: MSVSVEKRSAWFPPDWDDDERMSFLFSAFKENRDVDCTDWDGKIDFWSPLIIEHCRRCGSVCVNLQDLNENFRRKGSVPLGLSTVIQSMIRSGKVQKESDFAANVDSGWLSWGVGLLLVRPLKWTLSALLGSGRVPLEESFVVIELVKEKAAELLAAYRGSALSARSLLSFQELRSLSSHICPDESTLCMALLQLQREKHVTVSLHEGEKLVKFSQAGQGRVSPVSEVDLGIYQLQCSEKLLEERVEALGHEAEKCKQQAKSLLKEGKKSQALRCLRGSKRVEKKADRLFAQLETVKGILDRIANSQTDRLVMQAYQAGVAALRISLKGVTVERAENLVDQIQELCDTQDEVNQTLASGAPDAGEDSEDLEEELKSLMEKSVPENDLFPAVPTHPITPPRKTDLPDAAFVQFLPSVPNPGMNITDEELDRELRRLTVSDKGLPRESVSPQRRLEPAQ.

2 coiled-coil regions span residues 234–266 (QLQC…LLKE) and 331–382 (TVER…EKSV). 2 disordered regions span residues 381–401 (SVPE…PPRK) and 435–457 (LTVS…EPAQ).

Belongs to the SNF7 family.

The protein localises to the cytoplasm. The protein resides in the nucleus envelope. In terms of biological role, ESCRT-III-like protein required to recruit the ESCRT-III complex to the nuclear envelope during late anaphase. Together with SPAST, the ESCRT-III complex promotes nuclear envelope sealing and mitotic spindle disassembly during late anaphase. Plays a role in the endosomal sorting pathway. This is Charged multivesicular body protein 7 (chmp7) from Danio rerio (Zebrafish).